A 527-amino-acid chain; its full sequence is Protein Lilipod (527 aa).

Residues 1 to 22 (MDEEEEEEVTDLKLQLFHNTVR) lie on the Extracellular side of the membrane. A helical membrane pass occupies residues 23–43 (EHIIFLLLIILLYSSSYVVVS). Residues 44 to 65 (RFRRRDRDDLYSNDEDEVLVYR) lie on the Cytoplasmic side of the membrane. Residues 66–86 (ISFWLCTFTLAVAEGAAMLLP) traverse the membrane as a helical segment. Topologically, residues 87–117 (VSIASNEVLLLYPNSYYVKWLNSSLIQGLWN) are extracellular. A helical membrane pass occupies residues 118-138 (HVFLFSNLSLFIFLPFVYLFS). The Cytoplasmic portion of the chain corresponds to 139 to 160 (ESTGFVGNKKGILPRVYETFTV). A helical transmembrane segment spans residues 161–181 (FMLMAIIVLVLTAVLSAVFGI). The Extracellular segment spans residues 182-194 (EKLQFFWFLNLGS). The helical transmembrane segment at 195-215 (VHLPFLYSCVSFLGVMLMLIC) threads the bilayer. The Cytoplasmic portion of the chain corresponds to 216-341 (TPYGFVRLFG…LRTSSTFQRT (126 aa)). Residues 342-362 (FVYPLAMLLLLFCTAVTILLV) traverse the membrane as a helical segment. Over 363–395 (VQNTLELLIGIKALPLSTRQFALGISSLSKLGP) the chain is Extracellular. Residues 396–416 (FGAGLEVCLIFYLGATSVVGF) traverse the membrane as a helical segment. Over 417–433 (YSMPFMRKVCPKRRQTS) the chain is Cytoplasmic. A helical transmembrane segment spans residues 434–454 (LPQLMLNCGFMLVLSSALPLL). Topologically, residues 455–468 (SRIIGITNFDLLGD) are extracellular. The chain crosses the membrane as a helical span at residues 469–489 (FGAIEWLGNFQIVLLYNLVFG). The Cytoplasmic portion of the chain corresponds to 490–527 (TTTALCLANKFTATVRRELRARLVENYVLFTNYISFIN).

The protein belongs to the LIMR family. In the ovary, detected in germline stem cells and their progeny. Also detected in the somatic follicular epithelium.

The protein localises to the cell membrane. Required during oogenesis to promote self-renewal of germline stem cells, probably by enhancing BMP signaling activity. In Drosophila melanogaster (Fruit fly), this protein is Protein Lilipod.